The primary structure comprises 211 residues: Uracil phosphoribosyltransferase (211 aa).

Residues Arg-79, Arg-104, and 131 to 139 (DPMLATGGS) each bind 5-phospho-alpha-D-ribose 1-diphosphate. Residues Ile-196 and 201 to 203 (GDA) each bind uracil. Residue Asp-202 coordinates 5-phospho-alpha-D-ribose 1-diphosphate.

The protein belongs to the UPRTase family. The cofactor is Mg(2+).

The enzyme catalyses UMP + diphosphate = 5-phospho-alpha-D-ribose 1-diphosphate + uracil. Its pathway is pyrimidine metabolism; UMP biosynthesis via salvage pathway; UMP from uracil: step 1/1. Its activity is regulated as follows. Allosterically activated by GTP. Its function is as follows. Catalyzes the conversion of uracil and 5-phospho-alpha-D-ribose 1-diphosphate (PRPP) to UMP and diphosphate. This Lactococcus lactis subsp. lactis (strain IL1403) (Streptococcus lactis) protein is Uracil phosphoribosyltransferase.